The chain runs to 158 residues: uncharacterized protein (158 aa).

Over residues 1 to 21 (MPHTGSQHTLQATPKTAQHTG) the composition is skewed to polar residues. Disordered regions lie at residues 1–89 (MPHT…RVEG) and 107–158 (EEEK…DAKT). Composition is skewed to basic and acidic residues over residues 51–68 (HTEG…DKAG) and 107–127 (EEEK…RESR). A compositionally biased stretch (polar residues) spans 128-137 (QGTAHKSTCM). Positions 149–158 (EIGKVEDAKT) are enriched in basic and acidic residues.

This is an uncharacterized protein from Encephalitozoon cuniculi (strain GB-M1) (Microsporidian parasite).